A 313-amino-acid polypeptide reads, in one-letter code: 2,3-dihydroxyphenylpropionate/2,3-dihydroxicinnamic acid 1,2-dioxygenase (313 aa).

The Proton donor role is filled by His-115. The Proton acceptor role is filled by His-179.

Belongs to the LigB/MhpB extradiol dioxygenase family. Homotetramer. It depends on Fe(2+) as a cofactor.

The enzyme catalyses 3-(2,3-dihydroxyphenyl)propanoate + O2 = (2Z,4E)-2-hydroxy-6-oxonona-2,4-dienedioate + H(+). The catalysed reaction is (2E)-3-(2,3-dihydroxyphenyl)prop-2-enoate + O2 = (2Z,4E,7E)-2-hydroxy-6-oxonona-2,4,7-trienedioate + H(+). The protein operates within aromatic compound metabolism; 3-phenylpropanoate degradation. Its function is as follows. Catalyzes the non-heme iron(II)-dependent oxidative cleavage of 2,3-dihydroxyphenylpropionic acid and 2,3-dihydroxicinnamic acid into 2-hydroxy-6-ketononadienedioate and 2-hydroxy-6-ketononatrienedioate, respectively. In Xanthobacter autotrophicus (strain ATCC BAA-1158 / Py2), this protein is 2,3-dihydroxyphenylpropionate/2,3-dihydroxicinnamic acid 1,2-dioxygenase.